The primary structure comprises 271 residues: Putative cysteine protease YopT-like blr2140 (271 aa).

A disordered region spans residues 1–81; that stretch reads MYDRIGGSST…STSSPESPAT (81 aa). The segment covering 7 to 29 has biased composition (polar residues); the sequence is GSSTRTSQTDEPSQSVDSGSFTE. The segment covering 65 to 81 has biased composition (low complexity); sequence TSSASEPSTSSPESPAT. C100 is a catalytic residue. Residues 114–136 are disordered; that stretch reads SPSTRMSALTPGSQTHASAAERQ. Catalysis depends on residues H213 and D228.

Belongs to the peptidase C58 family.

Its function is as follows. Potential cysteine protease, which may play a central role after invasion of host cell. This Bradyrhizobium diazoefficiens (strain JCM 10833 / BCRC 13528 / IAM 13628 / NBRC 14792 / USDA 110) protein is Putative cysteine protease YopT-like blr2140.